The sequence spans 569 residues: Proline--tRNA ligase (569 aa).

It belongs to the class-II aminoacyl-tRNA synthetase family. ProS type 1 subfamily. As to quaternary structure, homodimer.

The protein localises to the cytoplasm. It carries out the reaction tRNA(Pro) + L-proline + ATP = L-prolyl-tRNA(Pro) + AMP + diphosphate. Its function is as follows. Catalyzes the attachment of proline to tRNA(Pro) in a two-step reaction: proline is first activated by ATP to form Pro-AMP and then transferred to the acceptor end of tRNA(Pro). As ProRS can inadvertently accommodate and process non-cognate amino acids such as alanine and cysteine, to avoid such errors it has two additional distinct editing activities against alanine. One activity is designated as 'pretransfer' editing and involves the tRNA(Pro)-independent hydrolysis of activated Ala-AMP. The other activity is designated 'posttransfer' editing and involves deacylation of mischarged Ala-tRNA(Pro). The misacylated Cys-tRNA(Pro) is not edited by ProRS. The sequence is that of Proline--tRNA ligase from Levilactobacillus brevis (strain ATCC 367 / BCRC 12310 / CIP 105137 / JCM 1170 / LMG 11437 / NCIMB 947 / NCTC 947) (Lactobacillus brevis).